Consider the following 98-residue polypeptide: Integration host factor subunit beta (98 aa).

This sequence belongs to the bacterial histone-like protein family. In terms of assembly, heterodimer of an alpha and a beta chain.

In terms of biological role, this protein is one of the two subunits of integration host factor, a specific DNA-binding protein that functions in genetic recombination as well as in transcriptional and translational control. The sequence is that of Integration host factor subunit beta from Pseudomonas syringae pv. tomato (strain ATCC BAA-871 / DC3000).